Consider the following 465-residue polypeptide: Cysteine--tRNA ligase (465 aa).

Residue cysteine 29 coordinates Zn(2+). The 'HIGH' region signature appears at 31-41 (PTVYNYIHIGN). Zn(2+)-binding residues include cysteine 209, histidine 234, and glutamate 238. A 'KMSKS' region motif is present at residues 266–270 (KMSKS). Lysine 269 is an ATP binding site. Residue serine 270 is modified to Phosphoserine.

It belongs to the class-I aminoacyl-tRNA synthetase family. As to quaternary structure, monomer. The cofactor is Zn(2+).

The protein resides in the cytoplasm. The catalysed reaction is tRNA(Cys) + L-cysteine + ATP = L-cysteinyl-tRNA(Cys) + AMP + diphosphate. The protein is Cysteine--tRNA ligase of Bacillus cereus (strain AH187).